Here is a 180-residue protein sequence, read N- to C-terminus: Dephospho-CoA kinase (180 aa).

A DPCK domain is found at 2–180 (VIGVTGKIGT…VMKLVWEKRE (179 aa)). 10–15 (GTGKST) lines the ATP pocket.

The protein belongs to the CoaE family.

The protein resides in the cytoplasm. The catalysed reaction is 3'-dephospho-CoA + ATP = ADP + CoA + H(+). It participates in cofactor biosynthesis; coenzyme A biosynthesis; CoA from (R)-pantothenate: step 5/5. Functionally, catalyzes the phosphorylation of the 3'-hydroxyl group of dephosphocoenzyme A to form coenzyme A. This Thermotoga maritima (strain ATCC 43589 / DSM 3109 / JCM 10099 / NBRC 100826 / MSB8) protein is Dephospho-CoA kinase.